We begin with the raw amino-acid sequence, 950 residues long: 2-oxoglutarate dehydrogenase E1 component (950 aa).

It belongs to the alpha-ketoglutarate dehydrogenase family. Homodimer. Part of the 2-oxoglutarate dehydrogenase (OGDH) complex composed of E1 (2-oxoglutarate dehydrogenase), E2 (dihydrolipoamide succinyltransferase) and E3 (dihydrolipoamide dehydrogenase); the complex contains multiple copies of the three enzymatic components (E1, E2 and E3). Requires thiamine diphosphate as cofactor.

It carries out the reaction N(6)-[(R)-lipoyl]-L-lysyl-[protein] + 2-oxoglutarate + H(+) = N(6)-[(R)-S(8)-succinyldihydrolipoyl]-L-lysyl-[protein] + CO2. In terms of biological role, E1 component of the 2-oxoglutarate dehydrogenase (OGDH) complex which catalyzes the decarboxylation of 2-oxoglutarate, the first step in the conversion of 2-oxoglutarate to succinyl-CoA and CO(2). This Cupriavidus necator (strain ATCC 17699 / DSM 428 / KCTC 22496 / NCIMB 10442 / H16 / Stanier 337) (Ralstonia eutropha) protein is 2-oxoglutarate dehydrogenase E1 component (odhA).